Consider the following 145-residue polypeptide: 3-hydroxyacyl-[acyl-carrier-protein] dehydratase FabZ (145 aa).

Histidine 51 is an active-site residue.

It belongs to the thioester dehydratase family. FabZ subfamily.

Its subcellular location is the cytoplasm. It carries out the reaction a (3R)-hydroxyacyl-[ACP] = a (2E)-enoyl-[ACP] + H2O. Functionally, involved in unsaturated fatty acids biosynthesis. Catalyzes the dehydration of short chain beta-hydroxyacyl-ACPs and long chain saturated and unsaturated beta-hydroxyacyl-ACPs. This Macrococcus caseolyticus (strain JCSC5402) (Macrococcoides caseolyticum) protein is 3-hydroxyacyl-[acyl-carrier-protein] dehydratase FabZ.